A 250-amino-acid polypeptide reads, in one-letter code: NAD(P)H-quinone oxidoreductase subunit K, chloroplastic (250 aa).

[4Fe-4S] cluster-binding residues include C67, C68, C132, and C163.

It belongs to the complex I 20 kDa subunit family. As to quaternary structure, NDH is composed of at least 16 different subunits, 5 of which are encoded in the nucleus. The cofactor is [4Fe-4S] cluster.

The protein localises to the plastid. It localises to the chloroplast thylakoid membrane. The catalysed reaction is a plastoquinone + NADH + (n+1) H(+)(in) = a plastoquinol + NAD(+) + n H(+)(out). It catalyses the reaction a plastoquinone + NADPH + (n+1) H(+)(in) = a plastoquinol + NADP(+) + n H(+)(out). Its function is as follows. NDH shuttles electrons from NAD(P)H:plastoquinone, via FMN and iron-sulfur (Fe-S) centers, to quinones in the photosynthetic chain and possibly in a chloroplast respiratory chain. The immediate electron acceptor for the enzyme in this species is believed to be plastoquinone. Couples the redox reaction to proton translocation, and thus conserves the redox energy in a proton gradient. The protein is NAD(P)H-quinone oxidoreductase subunit K, chloroplastic of Adiantum capillus-veneris (Maidenhair fern).